The following is a 119-amino-acid chain: Large ribosomal subunit protein bL20 (119 aa).

It belongs to the bacterial ribosomal protein bL20 family.

Functionally, binds directly to 23S ribosomal RNA and is necessary for the in vitro assembly process of the 50S ribosomal subunit. It is not involved in the protein synthesizing functions of that subunit. This is Large ribosomal subunit protein bL20 from Clostridium botulinum (strain Alaska E43 / Type E3).